The following is a 347-amino-acid chain: tRNA pseudouridine synthase D (347 aa).

The Nucleophile role is filled by D78. Residues 150–304 (GLPNFFGPQR…AEGTRRAARL (155 aa)) form the TRUD domain.

The protein belongs to the pseudouridine synthase TruD family.

It catalyses the reaction uridine(13) in tRNA = pseudouridine(13) in tRNA. Responsible for synthesis of pseudouridine from uracil-13 in transfer RNAs. This chain is tRNA pseudouridine synthase D, found in Anaeromyxobacter dehalogenans (strain 2CP-C).